A 214-amino-acid chain; its full sequence is A-type ATP synthase subunit D (214 aa).

This sequence belongs to the V-ATPase D subunit family. Has multiple subunits with at least A(3), B(3), C, D, E, F, H, I and proteolipid K(x).

The protein resides in the cell membrane. In terms of biological role, component of the A-type ATP synthase that produces ATP from ADP in the presence of a proton gradient across the membrane. The protein is A-type ATP synthase subunit D of Pyrococcus abyssi (strain GE5 / Orsay).